The primary structure comprises 268 residues: Probable RNA methyltransferase C2A9.10 (268 aa).

A Bin3-type SAM domain is found at 23–258 (DPRLKCLPDS…RTMYIYKKKG (236 aa)).

Belongs to the methyltransferase superfamily.

Functionally, probable RNA methyltransferase. This chain is Probable RNA methyltransferase C2A9.10, found in Schizosaccharomyces pombe (strain 972 / ATCC 24843) (Fission yeast).